A 247-amino-acid polypeptide reads, in one-letter code: Carboxy-S-adenosyl-L-methionine synthase (247 aa).

S-adenosyl-L-methionine contacts are provided by residues Y39, 64-66 (GCS), 89-90 (DN), 117-118 (DI), N132, and R199.

Belongs to the class I-like SAM-binding methyltransferase superfamily. Cx-SAM synthase family. In terms of assembly, homodimer.

It catalyses the reaction prephenate + S-adenosyl-L-methionine = carboxy-S-adenosyl-L-methionine + 3-phenylpyruvate + H2O. Catalyzes the conversion of S-adenosyl-L-methionine (SAM) to carboxy-S-adenosyl-L-methionine (Cx-SAM). This chain is Carboxy-S-adenosyl-L-methionine synthase, found in Klebsiella pneumoniae subsp. pneumoniae (strain ATCC 700721 / MGH 78578).